A 332-amino-acid chain; its full sequence is Lipoyl synthase (332 aa).

[4Fe-4S] cluster contacts are provided by Cys55, Cys60, Cys66, Cys81, Cys85, Cys88, and Ser292. In terms of domain architecture, Radical SAM core spans 67–281; that stretch reads WEDREATFLI…SDEAERIGFL (215 aa).

The protein belongs to the radical SAM superfamily. Lipoyl synthase family. Requires [4Fe-4S] cluster as cofactor.

It is found in the cytoplasm. The catalysed reaction is [[Fe-S] cluster scaffold protein carrying a second [4Fe-4S](2+) cluster] + N(6)-octanoyl-L-lysyl-[protein] + 2 oxidized [2Fe-2S]-[ferredoxin] + 2 S-adenosyl-L-methionine + 4 H(+) = [[Fe-S] cluster scaffold protein] + N(6)-[(R)-dihydrolipoyl]-L-lysyl-[protein] + 4 Fe(3+) + 2 hydrogen sulfide + 2 5'-deoxyadenosine + 2 L-methionine + 2 reduced [2Fe-2S]-[ferredoxin]. It participates in protein modification; protein lipoylation via endogenous pathway; protein N(6)-(lipoyl)lysine from octanoyl-[acyl-carrier-protein]: step 2/2. Catalyzes the radical-mediated insertion of two sulfur atoms into the C-6 and C-8 positions of the octanoyl moiety bound to the lipoyl domains of lipoate-dependent enzymes, thereby converting the octanoylated domains into lipoylated derivatives. The protein is Lipoyl synthase of Beutenbergia cavernae (strain ATCC BAA-8 / DSM 12333 / CCUG 43141 / JCM 11478 / NBRC 16432 / NCIMB 13614 / HKI 0122).